The following is a 351-amino-acid chain: Nicotinate-nucleotide--dimethylbenzimidazole phosphoribosyltransferase (351 aa).

The Proton acceptor role is filled by Glu-317.

Belongs to the CobT family.

The catalysed reaction is 5,6-dimethylbenzimidazole + nicotinate beta-D-ribonucleotide = alpha-ribazole 5'-phosphate + nicotinate + H(+). It functions in the pathway nucleoside biosynthesis; alpha-ribazole biosynthesis; alpha-ribazole from 5,6-dimethylbenzimidazole: step 1/2. In terms of biological role, catalyzes the synthesis of alpha-ribazole-5'-phosphate from nicotinate mononucleotide (NAMN) and 5,6-dimethylbenzimidazole (DMB). The chain is Nicotinate-nucleotide--dimethylbenzimidazole phosphoribosyltransferase from Pseudomonas putida (strain ATCC 47054 / DSM 6125 / CFBP 8728 / NCIMB 11950 / KT2440).